The sequence spans 263 residues: Kallikrein 1-related peptidase b24 (263 aa).

A signal peptide spans 1-17; that stretch reads MWFLILFLALSLGGIDA. Positions 18–24 are cleaved as a propeptide — activation peptide; the sequence is APPVQSR. One can recognise a Peptidase S1 domain in the interval 25-260; that stretch reads VVGGFKCEKN…FASWIKDTMA (236 aa). Cystine bridges form between Cys-31–Cys-175, Cys-50–Cys-66, Cys-154–Cys-221, Cys-186–Cys-200, and Cys-211–Cys-236. His-65 acts as the Charge relay system in catalysis. Residues Asn-69 and Asn-105 are each glycosylated (N-linked (GlcNAc...) asparagine). The active-site Charge relay system is the Asp-122. Residue Asn-185 is glycosylated (N-linked (GlcNAc...) asparagine). Ser-215 serves as the catalytic Charge relay system.

This sequence belongs to the peptidase S1 family. Kallikrein subfamily.

The catalysed reaction is Preferential cleavage of Arg-|-Xaa bonds in small molecule substrates. Highly selective action to release kallidin (lysyl-bradykinin) from kininogen involves hydrolysis of Met-|-Xaa or Leu-|-Xaa.. Its function is as follows. Glandular kallikreins cleave Met-Lys and Arg-Ser bonds in kininogen to release Lys-bradykinin. The polypeptide is Kallikrein 1-related peptidase b24 (Klk1b24) (Mus musculus (Mouse)).